The sequence spans 212 residues: Actin-depolymerizing factor 1, isoforms a/b (212 aa).

The ADF-H domain maps to 3–159 (SGVMVDPDVQ…SHKELLNNCP (157 aa)).

This sequence belongs to the actin-binding proteins ADF family. As to quaternary structure, interacts with F-actin.

Depolymerizes growing actin filaments in muscle cells; required for the assembly of actin filaments into the functional contractile myofilament lattice of muscle. Competes with unc-87 for actin binding and inhibits the actin-bundling activity of unc-87. The polypeptide is Actin-depolymerizing factor 1, isoforms a/b (Caenorhabditis elegans).